Reading from the N-terminus, the 728-residue chain is Catalase-peroxidase 1 (728 aa).

The first 16 residues, Met1–Gly16, serve as a signal peptide directing secretion. The segment at residues Trp97–Tyr225 is a cross-link (tryptophyl-tyrosyl-methioninium (Trp-Tyr) (with M-251)). The Proton acceptor role is filled by His98. A cross-link (tryptophyl-tyrosyl-methioninium (Tyr-Met) (with W-97)) is located at residues Tyr225–Met251. His266 is a heme b binding site.

This sequence belongs to the peroxidase family. Peroxidase/catalase subfamily. As to quaternary structure, homodimer or homotetramer. Heme b serves as cofactor. Formation of the three residue Trp-Tyr-Met cross-link is important for the catalase, but not the peroxidase activity of the enzyme.

It catalyses the reaction H2O2 + AH2 = A + 2 H2O. The enzyme catalyses 2 H2O2 = O2 + 2 H2O. Functionally, bifunctional enzyme with both catalase and broad-spectrum peroxidase activity. The chain is Catalase-peroxidase 1 from Shewanella frigidimarina (strain NCIMB 400).